We begin with the raw amino-acid sequence, 286 residues long: Pantothenate synthetase (286 aa).

An ATP-binding site is contributed by 30 to 37 (MGNLHSGH). His-37 serves as the catalytic Proton donor. Gln-61 is a (R)-pantoate binding site. Gln-61 is a beta-alanine binding site. An ATP-binding site is contributed by 149–152 (GQKD). Residue Gln-155 participates in (R)-pantoate binding. Residues Val-178 and 186-189 (LSSR) each bind ATP.

The protein belongs to the pantothenate synthetase family. In terms of assembly, homodimer.

It is found in the cytoplasm. The enzyme catalyses (R)-pantoate + beta-alanine + ATP = (R)-pantothenate + AMP + diphosphate + H(+). It functions in the pathway cofactor biosynthesis; (R)-pantothenate biosynthesis; (R)-pantothenate from (R)-pantoate and beta-alanine: step 1/1. In terms of biological role, catalyzes the condensation of pantoate with beta-alanine in an ATP-dependent reaction via a pantoyl-adenylate intermediate. The chain is Pantothenate synthetase from Pseudomonas fluorescens (strain Pf0-1).